The following is a 119-amino-acid chain: Large ribosomal subunit protein uL18 (119 aa).

It belongs to the universal ribosomal protein uL18 family. In terms of assembly, part of the 50S ribosomal subunit; part of the 5S rRNA/L5/L18/L25 subcomplex. Contacts the 5S and 23S rRNAs.

In terms of biological role, this is one of the proteins that bind and probably mediate the attachment of the 5S RNA into the large ribosomal subunit, where it forms part of the central protuberance. The polypeptide is Large ribosomal subunit protein uL18 (Cereibacter sphaeroides (strain ATCC 17029 / ATH 2.4.9) (Rhodobacter sphaeroides)).